A 493-amino-acid chain; its full sequence is Probable cytosol aminopeptidase (493 aa).

Residues K262 and D267 each coordinate Mn(2+). The active site involves K274. Mn(2+) contacts are provided by D286, D345, and E347. R349 is an active-site residue.

It belongs to the peptidase M17 family. Mn(2+) serves as cofactor.

The protein localises to the cytoplasm. It carries out the reaction Release of an N-terminal amino acid, Xaa-|-Yaa-, in which Xaa is preferably Leu, but may be other amino acids including Pro although not Arg or Lys, and Yaa may be Pro. Amino acid amides and methyl esters are also readily hydrolyzed, but rates on arylamides are exceedingly low.. The enzyme catalyses Release of an N-terminal amino acid, preferentially leucine, but not glutamic or aspartic acids.. Presumably involved in the processing and regular turnover of intracellular proteins. Catalyzes the removal of unsubstituted N-terminal amino acids from various peptides. The protein is Probable cytosol aminopeptidase of Cyanothece sp. (strain PCC 7425 / ATCC 29141).